The chain runs to 325 residues: MKIFDYEDIQLIPNKCIVESRSECNTSVKFGPRTFKLPVVPANMQTVMNEELAQWFAENDYFYIMHRFNEENRIPFIKKMHHAGLFASISVGVKENEFNFIEKLASSSLIPEYITIDIAHGHSNSVINMIKHIKKHLPNSFVIAGNVGTPEGVRELENAGADATKVGIGPGRVCITKIKTGFGTGGWQLSALNLCNKAARKPIIADGGLRTHGDIAKSIRFGATMVMIGSLFAAHEESPGETVELDGKKYKEYFGSASEYQKGEHKNVEGKKMFVEHKGSLKDTLTEMEQDLQSSISYAGGKDLKSLRTVDYVIVRNSIFNGDRD.

The active-site Thioimidate intermediate is C174. An NADP(+)-binding site is contributed by I203–V226.

Belongs to the IMPDH/GMPR family. GuaC type 2 subfamily.

The enzyme catalyses IMP + NH4(+) + NADP(+) = GMP + NADPH + 2 H(+). Catalyzes the irreversible NADPH-dependent deamination of GMP to IMP. It functions in the conversion of nucleobase, nucleoside and nucleotide derivatives of G to A nucleotides, and in maintaining the intracellular balance of A and G nucleotides. This chain is GMP reductase, found in Staphylococcus epidermidis (strain ATCC 35984 / DSM 28319 / BCRC 17069 / CCUG 31568 / BM 3577 / RP62A).